A 301-amino-acid polypeptide reads, in one-letter code: Acetylglutamate kinase (301 aa).

Residues 68–69, Arg90, and Asn195 each bind substrate; that span reads GG.

This sequence belongs to the acetylglutamate kinase family. ArgB subfamily.

It is found in the cytoplasm. The enzyme catalyses N-acetyl-L-glutamate + ATP = N-acetyl-L-glutamyl 5-phosphate + ADP. It participates in amino-acid biosynthesis; L-arginine biosynthesis; N(2)-acetyl-L-ornithine from L-glutamate: step 2/4. Catalyzes the ATP-dependent phosphorylation of N-acetyl-L-glutamate. This Pseudomonas putida (strain ATCC 700007 / DSM 6899 / JCM 31910 / BCRC 17059 / LMG 24140 / F1) protein is Acetylglutamate kinase.